A 171-amino-acid polypeptide reads, in one-letter code: uncharacterized protein (171 aa).

2 disordered regions span residues 68 to 124 and 140 to 171; these read NKNN…ASQQ and GDED…SIKN. Positions 141–160 are enriched in basic and acidic residues; that stretch reads DEDKGMDSTLKLPERTKRDS.

The protein belongs to the asfivirus H171R family.

The protein localises to the virion. This is an uncharacterized protein from Ornithodoros (relapsing fever ticks).